The chain runs to 694 residues: Long-chain-fatty-acid--CoA ligase 4 (694 aa).

Residues 1 to 21 (MTEQYSVAVGEAANEHETAPR) form a disordered region. 269–280 (YTSGSTGTPKGV) is a binding site for ATP. The FACS motif lies at 527 to 576 (DGWFRTGDIAEWTPKGQVKIIDRKKNLVKTLNGEYIALEKLESIYRSNPY).

It belongs to the ATP-dependent AMP-binding enzyme family. As to quaternary structure, interacts with FAT1. It depends on Mg(2+) as a cofactor.

The protein resides in the lipid droplet. It catalyses the reaction a long-chain fatty acid + ATP + CoA = a long-chain fatty acyl-CoA + AMP + diphosphate. The catalysed reaction is (9Z)-hexadecenoate + ATP + CoA = (9Z)-hexadecenoyl-CoA + AMP + diphosphate. The enzyme catalyses (9Z)-octadecenoate + ATP + CoA = (9Z)-octadecenoyl-CoA + AMP + diphosphate. It carries out the reaction hexadecanoate + ATP + CoA = hexadecanoyl-CoA + AMP + diphosphate. Its function is as follows. Activates long-chain fatty acids (LCFA) by esterification of the fatty acids into metabolically active CoA-thioesters for subsequent degradation or incorporation into phospholipids. Also facilitates the transport of LCFAs into the cell, either by active transport or by decreasing the intracellular LCFA concentration. Contributes, with FAA1, to the activation of imported myristate. Also involved in long-chain base (LCB) uptake. In contrast ot LCFA uptake, LCB uptake does not require ATP, suggesting that the enzyme is directly involved in LCB uptake. Involved in the sphingolipid-to-glycerolipid metabolic pathway, converting the sphingolipid metabolite hexadecenoic acid to hexadecenoyl-CoA, which is then further converted to glycerolipids. This is Long-chain-fatty-acid--CoA ligase 4 (FAA4) from Saccharomyces cerevisiae (strain ATCC 204508 / S288c) (Baker's yeast).